A 397-amino-acid chain; its full sequence is Bifunctional enzyme IspD/IspF (397 aa).

Residues 1–236 (MSIAAVILAA…QKKMQMFPDI (236 aa)) form a 2-C-methyl-D-erythritol 4-phosphate cytidylyltransferase region. Residues 237–397 (RTGNGYDVHS…NVLYPGEIPK (161 aa)) form a 2-C-methyl-D-erythritol 2,4-cyclodiphosphate synthase region. The a divalent metal cation site is built by Asp-243 and His-245. 4-CDP-2-C-methyl-D-erythritol 2-phosphate is bound by residues 243-245 (DVH) and 269-270 (HS). His-277 is a binding site for a divalent metal cation. 4-CDP-2-C-methyl-D-erythritol 2-phosphate is bound by residues 291 to 293 (DIG), 367 to 370 (TTNE), Phe-374, and Arg-377.

It in the N-terminal section; belongs to the IspD/TarI cytidylyltransferase family. IspD subfamily. In the C-terminal section; belongs to the IspF family. It depends on a divalent metal cation as a cofactor.

The catalysed reaction is 2-C-methyl-D-erythritol 4-phosphate + CTP + H(+) = 4-CDP-2-C-methyl-D-erythritol + diphosphate. The enzyme catalyses 4-CDP-2-C-methyl-D-erythritol 2-phosphate = 2-C-methyl-D-erythritol 2,4-cyclic diphosphate + CMP. It participates in isoprenoid biosynthesis; isopentenyl diphosphate biosynthesis via DXP pathway; isopentenyl diphosphate from 1-deoxy-D-xylulose 5-phosphate: step 2/6. The protein operates within isoprenoid biosynthesis; isopentenyl diphosphate biosynthesis via DXP pathway; isopentenyl diphosphate from 1-deoxy-D-xylulose 5-phosphate: step 4/6. Bifunctional enzyme that catalyzes the formation of 4-diphosphocytidyl-2-C-methyl-D-erythritol from CTP and 2-C-methyl-D-erythritol 4-phosphate (MEP) (IspD), and catalyzes the conversion of 4-diphosphocytidyl-2-C-methyl-D-erythritol 2-phosphate (CDP-ME2P) to 2-C-methyl-D-erythritol 2,4-cyclodiphosphate (ME-CPP) with a corresponding release of cytidine 5-monophosphate (CMP) (IspF). This chain is Bifunctional enzyme IspD/IspF, found in Bartonella henselae (strain ATCC 49882 / DSM 28221 / CCUG 30454 / Houston 1) (Rochalimaea henselae).